The following is a 375-amino-acid chain: DNA replication and repair protein RecF (375 aa).

30-37 (GNNGSGKS) lines the ATP pocket.

Belongs to the RecF family.

It is found in the cytoplasm. Its function is as follows. The RecF protein is involved in DNA metabolism; it is required for DNA replication and normal SOS inducibility. RecF binds preferentially to single-stranded, linear DNA. It also seems to bind ATP. This Hahella chejuensis (strain KCTC 2396) protein is DNA replication and repair protein RecF.